Consider the following 89-residue polypeptide: Small ribosomal subunit protein uS15 (89 aa).

Belongs to the universal ribosomal protein uS15 family. As to quaternary structure, part of the 30S ribosomal subunit. Forms a bridge to the 50S subunit in the 70S ribosome, contacting the 23S rRNA.

One of the primary rRNA binding proteins, it binds directly to 16S rRNA where it helps nucleate assembly of the platform of the 30S subunit by binding and bridging several RNA helices of the 16S rRNA. In terms of biological role, forms an intersubunit bridge (bridge B4) with the 23S rRNA of the 50S subunit in the ribosome. The sequence is that of Small ribosomal subunit protein uS15 from Chlamydia muridarum (strain MoPn / Nigg).